The sequence spans 523 residues: Lysine--tRNA ligase (523 aa).

A 'HIGH' region motif is present at residues 30–38; the sequence is PSGYVHVGN. Positions 95, 99, 100, 106, 177, 180, 199, and 203 each coordinate Zn(2+). A 'KMSKS' region motif is present at residues 279–283; it reads KMSGS.

It belongs to the class-I aminoacyl-tRNA synthetase family. The cofactor is Zn(2+).

The protein resides in the cytoplasm. It carries out the reaction tRNA(Lys) + L-lysine + ATP = L-lysyl-tRNA(Lys) + AMP + diphosphate. This chain is Lysine--tRNA ligase (lysS), found in Pyrococcus furiosus (strain ATCC 43587 / DSM 3638 / JCM 8422 / Vc1).